The primary structure comprises 130 residues: Small ribosomal subunit protein uS8 (130 aa).

The protein belongs to the universal ribosomal protein uS8 family. Part of the 30S ribosomal subunit. Contacts proteins S5 and S12.

Functionally, one of the primary rRNA binding proteins, it binds directly to 16S rRNA central domain where it helps coordinate assembly of the platform of the 30S subunit. The protein is Small ribosomal subunit protein uS8 of Aeromonas salmonicida (strain A449).